A 148-amino-acid chain; its full sequence is Truncated transcription factor CAULIFLOWER D (148 aa).

Positions 1 to 61 (MGRGRVEMKR…GKLFEYSSES (61 aa)) constitute an MADS-box domain. The region spanning 90-148 (QTNWSMEYSRLKAKIELWERNQRHYLGEDLESISIKELQNLEQQLDTSLKHIRSRKVCK) is the K-box; partial domain.

Homodimer capable of binding to CArG-box sequences.

The protein resides in the nucleus. Probable transcription factor that promotes early floral meristem identity in synergy with APETALA1, FRUITFULL and LEAFY. Is required subsequently for the transition of an inflorescence meristem into a floral meristem. Seems to be partially redundant to the function of APETALA1. The chain is Truncated transcription factor CAULIFLOWER D (CAL-D) from Brassica oleracea var. botrytis (Cauliflower).